A 455-amino-acid chain; its full sequence is Bifunctional protein GlmU (455 aa).

The segment at 1 to 229 is pyrophosphorylase; the sequence is MYNCAILLAA…FEETMGVNSR (229 aa). UDP-N-acetyl-alpha-D-glucosamine is bound by residues 8-11, Lys22, Gln73, and 78-79; these read LAAG and GT. A Mg(2+)-binding site is contributed by Asp103. Residues Gly140, Glu155, Asn170, and Asn227 each contribute to the UDP-N-acetyl-alpha-D-glucosamine site. Mg(2+) is bound at residue Asn227. The linker stretch occupies residues 230-250; that stretch reads LQLAEVEAIMRKRINAMHLEN. The N-acetyltransferase stretch occupies residues 251–455; it reads GVTIIDPNNT…EDWVKKKDEK (205 aa). Residues Arg332 and Lys350 each contribute to the UDP-N-acetyl-alpha-D-glucosamine site. The active-site Proton acceptor is the His362. Residues Tyr365 and Asn376 each contribute to the UDP-N-acetyl-alpha-D-glucosamine site. Acetyl-CoA-binding positions include 385-386, Ala422, and Arg439; that span reads NY.

It in the N-terminal section; belongs to the N-acetylglucosamine-1-phosphate uridyltransferase family. The protein in the C-terminal section; belongs to the transferase hexapeptide repeat family. As to quaternary structure, homotrimer. The cofactor is Mg(2+).

It localises to the cytoplasm. It carries out the reaction alpha-D-glucosamine 1-phosphate + acetyl-CoA = N-acetyl-alpha-D-glucosamine 1-phosphate + CoA + H(+). The catalysed reaction is N-acetyl-alpha-D-glucosamine 1-phosphate + UTP + H(+) = UDP-N-acetyl-alpha-D-glucosamine + diphosphate. Its pathway is nucleotide-sugar biosynthesis; UDP-N-acetyl-alpha-D-glucosamine biosynthesis; N-acetyl-alpha-D-glucosamine 1-phosphate from alpha-D-glucosamine 6-phosphate (route II): step 2/2. The protein operates within nucleotide-sugar biosynthesis; UDP-N-acetyl-alpha-D-glucosamine biosynthesis; UDP-N-acetyl-alpha-D-glucosamine from N-acetyl-alpha-D-glucosamine 1-phosphate: step 1/1. It functions in the pathway bacterial outer membrane biogenesis; LPS lipid A biosynthesis. Catalyzes the last two sequential reactions in the de novo biosynthetic pathway for UDP-N-acetylglucosamine (UDP-GlcNAc). The C-terminal domain catalyzes the transfer of acetyl group from acetyl coenzyme A to glucosamine-1-phosphate (GlcN-1-P) to produce N-acetylglucosamine-1-phosphate (GlcNAc-1-P), which is converted into UDP-GlcNAc by the transfer of uridine 5-monophosphate (from uridine 5-triphosphate), a reaction catalyzed by the N-terminal domain. In Clostridium tetani (strain Massachusetts / E88), this protein is Bifunctional protein GlmU.